A 344-amino-acid chain; its full sequence is Olfactory receptor class A-like protein 4 (344 aa).

The Extracellular segment spans residues 1-10 (MSEVLTVDAV). Residues 11-31 (LFGLLVFSGIIGNIMVIYVVF) traverse the membrane as a helical segment. At 32–47 (DCAKLCASRHLPPSDT) the chain is on the cytoplasmic side. Residues 48–68 (ILVHLCLANLLTSVFRTVPIF) traverse the membrane as a helical segment. Topologically, residues 69 to 84 (VSDLGLQVWLTAGWCR) are extracellular. A disulfide bond links Cys-83 and Cys-169. Residues 85–105 (VFMLLWVWWRAVGCWVTLALS) form a helical membrane-spanning segment. Topologically, residues 106-130 (AFHCATLRRQHVSMGPLGHSRERRR) are cytoplasmic. The chain crosses the membrane as a helical span at residues 131–151 (VWVVLAVVWAANLLFSLPALV). Residues 152 to 186 (YTTQVRGNATVELMVISCTTRPLLGCVWEFPTFQQ) are Extracellular-facing. Asn-159 carries an N-linked (GlcNAc...) asparagine glycan. Residues 187-207 (GYAFASSSLALNEVLPLVLMV) form a helical membrane-spanning segment. The Cytoplasmic portion of the chain corresponds to 208 to 246 (GTNLATLQALGKHIRTVRAGGSTGAELDRHVSSERKAGH). Residues 247–267 (VIMALVALFVGCWVLQVAAVT) traverse the membrane as a helical segment. Residues 268–279 (YYNHNRGAHAEG) are Extracellular-facing. A helical membrane pass occupies residues 280–300 (LLTVAHFSASLFVGFSPLVVA). The Cytoplasmic portion of the chain corresponds to 301 to 344 (LGHGKLRRRISGILQSCMHRLKQTQDKPAEITEKDGRTTQSAMK). Positions 324–337 (TQDKPAEITEKDGR) are enriched in basic and acidic residues. The disordered stretch occupies residues 324–344 (TQDKPAEITEKDGRTTQSAMK).

Belongs to the G-protein coupled receptor 1 family. As to expression, highly expressed in the olfactory rosette. Specifically localizes to crypt neurons in the olfactory neuroepithelium. Colocalizes with the inhibitory G-protein gnaia in crypt neurons. Not detected in other tissues tested.

The protein localises to the cell membrane. Functionally, probable olfactory receptor. This chain is Olfactory receptor class A-like protein 4 (ora4), found in Danio rerio (Zebrafish).